Reading from the N-terminus, the 74-residue chain is Putative ribosome-binding protein YbzG (74 aa).

This chain is Putative ribosome-binding protein YbzG (ybzG), found in Bacillus subtilis (strain 168).